We begin with the raw amino-acid sequence, 399 residues long: Glutathione S-transferase LANCL1 (399 aa).

An N-acetylalanine modification is found at A2. K142 carries the post-translational modification N6-acetyllysine. Zn(2+) is bound at residue C276. K317 serves as a coordination point for glutathione. Residues C322 and H323 each contribute to the Zn(2+) site. 364 to 367 (RTPD) serves as a coordination point for glutathione.

The protein belongs to the LanC-like protein family. In terms of assembly, interacts with the C-terminal of STOM. Interacts with the EPS8 SH3 domain. Interaction with EPS8 is inhibited by glutathione binding. As to expression, expressed in brain.

The protein resides in the cytoplasm. The protein localises to the cell membrane. It carries out the reaction RX + glutathione = an S-substituted glutathione + a halide anion + H(+). It catalyses the reaction 1-chloro-2,4-dinitrobenzene + glutathione = 2,4-dinitrophenyl-S-glutathione + chloride + H(+). Functions as a glutathione transferase. Catalyzes conjugation of the glutathione (GSH) to artificial substrates 1-chloro-2,4-dinitrobenzene (CDNB) and p-nitrophenyl acetate. Mitigates neuronal oxidative stress during normal postnatal development and in response to oxidative stresses probably through GSH antioxidant defense mechanism. May play a role in EPS8 signaling. Binds glutathione. This is Glutathione S-transferase LANCL1 (LANCL1) from Bos taurus (Bovine).